A 139-amino-acid polypeptide reads, in one-letter code: Putative pre-16S rRNA nuclease (139 aa).

Belongs to the YqgF nuclease family.

Its subcellular location is the cytoplasm. Functionally, could be a nuclease involved in processing of the 5'-end of pre-16S rRNA. This is Putative pre-16S rRNA nuclease from Streptococcus pyogenes serotype M1.